The following is a 231-amino-acid chain: Somatolactin-2 (231 aa).

Residues 1–24 (MRMMRAIKQGQWAILLWPYLLTTS) form the signal peptide. 3 cysteine pairs are disulfide-bonded: C29–C39, C89–C205, and C222–C230. A glycan (N-linked (GlcNAc...) asparagine) is linked at N145.

This sequence belongs to the somatotropin/prolactin family. As to expression, pituitary gland.

Its subcellular location is the secreted. The sequence is that of Somatolactin-2 from Sparus aurata (Gilthead sea bream).